The sequence spans 160 residues: MHVVYPGSFDPLTNGHLDVIQRASRLFEKVTVAVLENPSKRGQYLFSAEERLAIIREATAHLANVEAATFSGLLVDFVRRVGAQAIVKGLRAVSDYEYELQMAHLNRQLYPGLETLFILAATRYSFVSSTMVKEIARYGGDVSKLVPPATLRALKAKLGQ.

Residue Ser8 coordinates substrate. ATP is bound by residues 8–9 (SF) and His16. Substrate is bound by residues Lys40, Leu74, and Lys88. Residues 89 to 91 (GLR), Glu99, and 124 to 130 (YSFVSST) contribute to the ATP site.

It belongs to the bacterial CoaD family. In terms of assembly, homohexamer. Mg(2+) serves as cofactor.

The protein resides in the cytoplasm. The catalysed reaction is (R)-4'-phosphopantetheine + ATP + H(+) = 3'-dephospho-CoA + diphosphate. It participates in cofactor biosynthesis; coenzyme A biosynthesis; CoA from (R)-pantothenate: step 4/5. Reversibly transfers an adenylyl group from ATP to 4'-phosphopantetheine, yielding dephospho-CoA (dPCoA) and pyrophosphate. This chain is Phosphopantetheine adenylyltransferase, found in Thermus thermophilus (strain ATCC BAA-163 / DSM 7039 / HB27).